We begin with the raw amino-acid sequence, 280 residues long: Ribosomal RNA small subunit methyltransferase A (280 aa).

S-adenosyl-L-methionine is bound by residues Asn18, Leu20, Gly45, Glu66, Asp89, and Asn110.

It belongs to the class I-like SAM-binding methyltransferase superfamily. rRNA adenine N(6)-methyltransferase family. RsmA subfamily.

Its subcellular location is the cytoplasm. The catalysed reaction is adenosine(1518)/adenosine(1519) in 16S rRNA + 4 S-adenosyl-L-methionine = N(6)-dimethyladenosine(1518)/N(6)-dimethyladenosine(1519) in 16S rRNA + 4 S-adenosyl-L-homocysteine + 4 H(+). In terms of biological role, specifically dimethylates two adjacent adenosines (A1518 and A1519) in the loop of a conserved hairpin near the 3'-end of 16S rRNA in the 30S particle. May play a critical role in biogenesis of 30S subunits. This is Ribosomal RNA small subunit methyltransferase A from Cupriavidus necator (strain ATCC 17699 / DSM 428 / KCTC 22496 / NCIMB 10442 / H16 / Stanier 337) (Ralstonia eutropha).